The following is a 99-amino-acid chain: DNA-directed RNA polymerase subunit omega (99 aa).

It belongs to the RNA polymerase subunit omega family. In terms of assembly, the RNAP catalytic core consists of 2 alpha, 1 beta, 1 beta' and 1 omega subunit. When a sigma factor is associated with the core the holoenzyme is formed, which can initiate transcription.

It catalyses the reaction RNA(n) + a ribonucleoside 5'-triphosphate = RNA(n+1) + diphosphate. Its function is as follows. Promotes RNA polymerase assembly. Latches the N- and C-terminal regions of the beta' subunit thereby facilitating its interaction with the beta and alpha subunits. The chain is DNA-directed RNA polymerase subunit omega (rpoZ) from Xylella fastidiosa (strain 9a5c).